We begin with the raw amino-acid sequence, 148 residues long: Large ribosomal subunit protein bL9 (148 aa).

The protein belongs to the bacterial ribosomal protein bL9 family.

In terms of biological role, binds to the 23S rRNA. The sequence is that of Large ribosomal subunit protein bL9 from Ectopseudomonas mendocina (strain ymp) (Pseudomonas mendocina).